A 117-amino-acid polypeptide reads, in one-letter code: G antigen 12H (117 aa).

The disordered stretch occupies residues 1 to 117 (MSWRGRSTYY…PEEGEKQSQC (117 aa)). Composition is skewed to acidic residues over residues 32–45 (FSDE…EEGE) and 87–96 (ECEDGPDGQE). Basic and acidic residues predominate over residues 103–117 (EEVKTPEEGEKQSQC).

This sequence belongs to the GAGE family.

This is G antigen 12H (GAGE12H) from Homo sapiens (Human).